The sequence spans 453 residues: uncharacterized protein (453 aa).

This is an uncharacterized protein from Magallana gigas (Pacific oyster).